The primary structure comprises 428 residues: 3-phosphoshikimate 1-carboxyvinyltransferase (428 aa).

Residues lysine 20, serine 21, and arginine 25 each contribute to the 3-phosphoshikimate site. Phosphoenolpyruvate is bound at residue lysine 20. Glycine 92 and arginine 120 together coordinate phosphoenolpyruvate. Positions 166, 168, 314, and 341 each coordinate 3-phosphoshikimate. Glutamine 168 is a phosphoenolpyruvate binding site. The active-site Proton acceptor is aspartate 314. The phosphoenolpyruvate site is built by arginine 345 and arginine 387.

The protein belongs to the EPSP synthase family. Monomer.

Its subcellular location is the cytoplasm. The enzyme catalyses 3-phosphoshikimate + phosphoenolpyruvate = 5-O-(1-carboxyvinyl)-3-phosphoshikimate + phosphate. It participates in metabolic intermediate biosynthesis; chorismate biosynthesis; chorismate from D-erythrose 4-phosphate and phosphoenolpyruvate: step 6/7. Catalyzes the transfer of the enolpyruvyl moiety of phosphoenolpyruvate (PEP) to the 5-hydroxyl of shikimate-3-phosphate (S3P) to produce enolpyruvyl shikimate-3-phosphate and inorganic phosphate. The polypeptide is 3-phosphoshikimate 1-carboxyvinyltransferase (Listeria monocytogenes serotype 4a (strain HCC23)).